Here is a 510-residue protein sequence, read N- to C-terminus: MSVQTTYSPVNQDEQVHDGLASRHVSCEGAPSDDSPYALSSLDHNPLGINVSFLLCFHAAQPEEGIRVLEDGINQLLKAHPFLAGDVTRPTRLSQRTNTMQIEPDAPESLLKIPMLQIRHHPATSIEELESKRLLPGAEEQEIIRQLAPLPIDMDLSLPQRPVLRFQANIMRDGVILAMTFHHAAMDGAGAARVLGLLADYCRDPAAPSVGVIPDRQLRSQIDRLATGCSPSASRADFSQHYCGLGDWAALLAENWPGFLQARATELVTWRLTIPGFKVQYLKGACNALLQGQTSALAGGTLTPTILSNNDIVSALMAMILRQAGQLAGKSTELSIAVDMRPSFHAPAFNNYLGNMVLLTYTPIPAAKDQAPVDGPRPPTELRQEDLEELTGIAARIRQSLLKVDAEYIQGVLSHLHSQTDWANIGFRGVPIPLSSFRNFEMIGLDFGETLGSQPRGFQLHLPVLGGMCFVLPKRQDRTEPWDLHLTLHRDDVSRIANDPLFRWAAGEHF.

Belongs to the fumigaclavine B O-acetyltransferase family.

The protein operates within secondary metabolite biosynthesis; terpenoid biosynthesis. Its function is as follows. O-acetyltransferase; part of the gene cluster that mediates the biosynthesis of pyripyropene A, a specific human acyl-coenzyme A:cholesterol acyltransferase 2 inhibitor. The first step of the pathway is the synthesis of nicotinyl-CoA from nicotinic acid by the nicotinic acid-CoA ligase pyr1. Nicotinyl-CoA is then a substrate of polyketide synthase pyr2 to produce 4-hydroxy-6-(3-pyridinyl)-2H-pyran-2-one (HPPO) which is further prenylated by the polyprenyl transferase pyr6 to yield farnesyl-HPPO. The next steps consist of an epoxidation of farnesyl-HPPO to epoxyfarnesyl-HPPO by FAD-dependent monooxygenase pyr5 and a cyclization of the terpenoid portion by the terpene cyclase pyr4 to yield deacetyl-pyripyropene E. The 2 cytochrome P450 monooxygenases pyr3 and pyr9, and the 2 acetyltransferases pyr7 and pyr8 are involved in the conversion of deacetyl-pyripyropene E into pyripyropene A through several cycles of oxidation and acetylation steps. Pyr7 acetylates deacetyl-pyripyropene E to pyripyropene E which is oxidized to 11-deacetyl-pyripyropene O by pyr3, which is in turn acetylated into pyripyropene O by pyr8. Pyripyropene O is then oxidized to deacetyl-pyripyropene A by pyr9. Deacetyl-pyripyropene A is finally acetylated to pyripyropene A by pyr8. In Aspergillus fumigatus (strain ATCC MYA-4609 / CBS 101355 / FGSC A1100 / Af293) (Neosartorya fumigata), this protein is O-acetyltransferase pyr7.